The primary structure comprises 257 residues: MADS-box transcription factor 1 (257 aa).

An MADS-box domain is found at 1–61 (MGRGKVELKR…GRLFEFSSSS (61 aa)). Positions 85-175 (NEINYQEYLK…RKKLQETSAE (91 aa)) constitute a K-box domain.

In terms of assembly, may interact with the K-box of MADS6, MADS14 and MADS15.

The protein localises to the nucleus. Functionally, probable transcription factor involved in the development of floral organs. Required for the formation of inner floral organs (lodicules, stamens and carpels, or whorls 2, 3 and 4) and the lemma and palea (whorl 1), which are grass floral organs analogous to sepals. May be involved in the control of flowering time. Seems to act as transcriptional activator. May act upstream of the auxin-responsive protein GH3.8. The chain is MADS-box transcription factor 1 (MADS1) from Oryza sativa subsp. indica (Rice).